The primary structure comprises 370 residues: MLIFPLINDTSRKIIHIDMDAFFAAVEERDNPKLKGKPLVIGADPRQTGGRGVVSTANYLAREFGIHSAMSSKEAYERCPQAIFIRGNHTKYRQIGLQVREIFRRYTDLVEPMSIDEAYLDVTENKLNIKSAVKIAKLIQRDIWEEFHLTCSAGVSYNKFLAKLASDYDKPHGLTVILPQDAEGFLATLPIEKFYGVGKKSVEKLHALHIFTGKDVQQVPEMTLIDLFGRFGFDLYRKARGISNSPVKNDRIRKSIGSERTYGKLLYNDEDIKLELSKTARRVADSLKKHGRKGKIVVIKVRYSDFSTLTKRKTLDVPTQDFEVIERSAHRIFDHLTENNSGVRLLGVTVTALEDSTREELSLTADDFKT.

Residues 14–198 enclose the UmuC domain; that stretch reads IIHIDMDAFF…LPIEKFYGVG (185 aa). The Mg(2+) site is built by Asp-18 and Asp-116. The active site involves Glu-117.

The protein belongs to the DNA polymerase type-Y family. Monomer. It depends on Mg(2+) as a cofactor.

Its subcellular location is the cytoplasm. The catalysed reaction is DNA(n) + a 2'-deoxyribonucleoside 5'-triphosphate = DNA(n+1) + diphosphate. Its function is as follows. Poorly processive, error-prone DNA polymerase involved in untargeted mutagenesis. Copies undamaged DNA at stalled replication forks, which arise in vivo from mismatched or misaligned primer ends. These misaligned primers can be extended by PolIV. Exhibits no 3'-5' exonuclease (proofreading) activity. May be involved in translesional synthesis, in conjunction with the beta clamp from PolIII. This is DNA polymerase IV from Streptococcus mutans serotype c (strain ATCC 700610 / UA159).